Consider the following 361-residue polypeptide: Divinyl chlorophyll a/b light-harvesting protein PcbD (361 aa).

The next 6 membrane-spanning stretches (helical) occupy residues 27–47, 93–113, 140–160, 201–221, 248–268, and 315–335; these read FIAS…GSTL, IVHL…GILF, FILG…VEWA, VMGG…FHIV, AVLS…AFWC, and LTNV…WHAL.

It belongs to the PsbB/PsbC family. IsiA/Pcb subfamily. In terms of assembly, the antenna complex consists of divinyl chlorophylls (a and b) and divinyl chlorophyll a/b binding proteins and binds more divinyl chlorophyll b than does the antenna complex from high-light-adapted Prochlorococcus. Divinyl chlorophyll a is required as a cofactor. It depends on divinyl chlorophyll b as a cofactor.

It localises to the cellular thylakoid membrane. The antenna complex functions as a light receptor, it captures and delivers excitation energy to photosystems II and I. The Prochlorales pcb genes are not related to higher plant LHCs. The sequence is that of Divinyl chlorophyll a/b light-harvesting protein PcbD (pcbD) from Prochlorococcus marinus (strain SARG / CCMP1375 / SS120).